A 203-amino-acid polypeptide reads, in one-letter code: Inactive ribonuclease-like protein 9 (203 aa).

The N-terminal stretch at 1–25 is a signal peptide; it reads MRTPITTHSLLLLLLLQQLLQPVQL. Intrachain disulfides connect Cys-96/Cys-151, Cys-114/Cys-166, and Cys-121/Cys-128. Asn-129 and Asn-141 each carry an N-linked (GlcNAc...) asparagine glycan.

It belongs to the pancreatic ribonuclease family.

The protein resides in the secreted. In terms of biological role, does not exhibit any ribonuclease activity. This chain is Inactive ribonuclease-like protein 9 (RNASE9), found in Macaca assamensis (Assam macaque).